The primary structure comprises 597 residues: Nucleolar protein 58 (597 aa).

Positions 285-410 constitute a Nop domain; the sequence is IAPNMTELVG…LENNLRQLEG (126 aa). Residues 452–597 are disordered; sequence AEAPKKPLIQ…KKKKKKSSKE (146 aa). The span at 482 to 499 shows a compositional bias: basic residues; that stretch reads KSKKDKKEKKEKKDKKAK. Residues 532–551 are compositionally biased toward basic and acidic residues; it reads IKEDGTLEILSKKDFKGKDA. Residues 552 to 561 show a composition bias toward acidic residues; the sequence is EAEEEAEEEE. A compositionally biased stretch (basic residues) spans 588 to 597; that stretch reads KKKKKKSSKE.

Belongs to the NOP5/NOP56 family.

It localises to the nucleus. Its subcellular location is the nucleolus. Its function is as follows. Required for pre-18S rRNA processing. May bind microtubules. This is Nucleolar protein 58 (nop-58) from Neurospora crassa (strain ATCC 24698 / 74-OR23-1A / CBS 708.71 / DSM 1257 / FGSC 987).